Consider the following 338-residue polypeptide: Glyceraldehyde-3-phosphate dehydrogenase (338 aa).

Residues 12–13 (RI), D34, and R80 each bind NAD(+). D-glyceraldehyde 3-phosphate is bound by residues 151–153 (SCT), T182, 211–212 (TG), and R234. C152 serves as the catalytic Nucleophile. An NAD(+)-binding site is contributed by N316.

Belongs to the glyceraldehyde-3-phosphate dehydrogenase family. In terms of assembly, homotetramer.

It localises to the cytoplasm. It carries out the reaction D-glyceraldehyde 3-phosphate + phosphate + NAD(+) = (2R)-3-phospho-glyceroyl phosphate + NADH + H(+). The protein operates within carbohydrate degradation; glycolysis; pyruvate from D-glyceraldehyde 3-phosphate: step 1/5. This Paracoccidioides lutzii (strain ATCC MYA-826 / Pb01) (Paracoccidioides brasiliensis) protein is Glyceraldehyde-3-phosphate dehydrogenase (GPD).